Reading from the N-terminus, the 445-residue chain is Exodeoxyribonuclease 7 large subunit (445 aa).

It belongs to the XseA family. In terms of assembly, heterooligomer composed of large and small subunits.

It localises to the cytoplasm. The catalysed reaction is Exonucleolytic cleavage in either 5'- to 3'- or 3'- to 5'-direction to yield nucleoside 5'-phosphates.. Bidirectionally degrades single-stranded DNA into large acid-insoluble oligonucleotides, which are then degraded further into small acid-soluble oligonucleotides. This chain is Exodeoxyribonuclease 7 large subunit, found in Nautilia profundicola (strain ATCC BAA-1463 / DSM 18972 / AmH).